The sequence spans 300 residues: Ferredoxin/F(420)H(2)-dependent CoB-CoM heterodisulfide reductase subunit B (300 aa).

It belongs to the HdrB family. As to quaternary structure, the ferredoxin/F(420)H(2)-dependent CoB-CoM heterodisulfide reductase is composed of three subunits; HdrA2, HdrB2 and HdrC2. The cofactor is [4Fe-4S] cluster.

It localises to the cytoplasm. It catalyses the reaction coenzyme B + coenzyme M + 2 oxidized [2Fe-2S]-[ferredoxin] = coenzyme M-coenzyme B heterodisulfide + 2 reduced [2Fe-2S]-[ferredoxin] + 2 H(+). The enzyme catalyses coenzyme B + 2 oxidized coenzyme F420-(gamma-L-Glu)(n) + coenzyme M + 2 reduced [2Fe-2S]-[ferredoxin] + 4 H(+) = coenzyme M-coenzyme B heterodisulfide + 2 reduced coenzyme F420-(gamma-L-Glu)(n) + 2 oxidized [2Fe-2S]-[ferredoxin]. The protein operates within cofactor metabolism; coenzyme M-coenzyme B heterodisulfide reduction; coenzyme B and coenzyme M from coenzyme M-coenzyme B heterodisulfide: step 1/1. Functionally, part of a complex that catalyzes the reversible reduction of CoM-S-S-CoB to the thiol-coenzymes H-S-CoM (coenzyme M) and H-S-CoB (coenzyme B). Catalyzes the transfer of electrons from ferredoxin to CoM-S-S-CoB during methanogenesis from acetate. Electrons transfer from ferredoxin to CoM-S-S-CoB via HdrA2, HdrC2 and HdrB2. In addition, the complex can use electron bifurcation to direct electron pairs from reduced coenzyme F420 towards the reduction of both ferredoxin and CoB-CoM heterodisulfide. This activity may take place during Fe(III)-dependent anaerobic methane oxidation. This is Ferredoxin/F(420)H(2)-dependent CoB-CoM heterodisulfide reductase subunit B from Methanosarcina acetivorans (strain ATCC 35395 / DSM 2834 / JCM 12185 / C2A).